We begin with the raw amino-acid sequence, 173 residues long: Probable transcription termination protein NusA (173 aa).

Residues 31-97 (DEKIVFVVKE…EDVWVKKFGN (67 aa)) enclose the KH domain. Basic and acidic residues predominate over residues 147 to 162 (ADNRPKKDEIPEKAAE). Positions 147–173 (ADNRPKKDEIPEKAAESSENVQAEENQ) are disordered. Over residues 163-173 (SSENVQAEENQ) the composition is skewed to polar residues.

This sequence belongs to the NusA family.

The protein localises to the cytoplasm. Participates in transcription termination. The chain is Probable transcription termination protein NusA from Methanococcus vannielii (strain ATCC 35089 / DSM 1224 / JCM 13029 / OCM 148 / SB).